The primary structure comprises 319 residues: Phospho-N-acetylmuramoyl-pentapeptide-transferase (319 aa).

A run of 10 helical transmembrane segments spans residues 5–25 (LIPFISSFALTVIFLPLFIGF), 51–71 (TMGGVVFMLAGVISTLWVLIW), 79–99 (AWILIIAFLGYGIIGFLDDGI), 116–136 (LGQIIIAALIITLAFSDHFAF), 149–169 (SFLFSLFVLFWLVGFSNAVNL), 172–192 (GLDGLATGLSIIAYATYAWIA), 197–217 (NWVIVVFTLSVIGGLVGFFIF), 224–244 (IFMGDAGSLALGGGLATVSIF), 252–272 (LLIGIVFVLETLSVILQVISF), and 299–319 (VDIVFWIVGLIGSIIYLIIWG).

Belongs to the glycosyltransferase 4 family. MraY subfamily. Mg(2+) is required as a cofactor.

It localises to the cell membrane. The catalysed reaction is UDP-N-acetyl-alpha-D-muramoyl-L-alanyl-gamma-D-glutamyl-L-lysyl-D-alanyl-D-alanine + di-trans,octa-cis-undecaprenyl phosphate = Mur2Ac(oyl-L-Ala-gamma-D-Glu-L-Lys-D-Ala-D-Ala)-di-trans,octa-cis-undecaprenyl diphosphate + UMP. The protein operates within cell wall biogenesis; peptidoglycan biosynthesis. In terms of biological role, catalyzes the initial step of the lipid cycle reactions in the biosynthesis of the cell wall peptidoglycan: transfers peptidoglycan precursor phospho-MurNAc-pentapeptide from UDP-MurNAc-pentapeptide onto the lipid carrier undecaprenyl phosphate, yielding undecaprenyl-pyrophosphoryl-MurNAc-pentapeptide, known as lipid I. This is Phospho-N-acetylmuramoyl-pentapeptide-transferase from Lactobacillus johnsonii (strain CNCM I-12250 / La1 / NCC 533).